Reading from the N-terminus, the 247-residue chain is Ribosomal RNA large subunit methyltransferase E (247 aa).

S-adenosyl-L-methionine-binding residues include Gly-99, Trp-101, Asp-123, Asp-139, and Asp-162. Lys-202 (proton acceptor) is an active-site residue.

Belongs to the class I-like SAM-binding methyltransferase superfamily. RNA methyltransferase RlmE family.

Its subcellular location is the cytoplasm. It carries out the reaction uridine(2552) in 23S rRNA + S-adenosyl-L-methionine = 2'-O-methyluridine(2552) in 23S rRNA + S-adenosyl-L-homocysteine + H(+). Functionally, specifically methylates the uridine in position 2552 of 23S rRNA at the 2'-O position of the ribose in the fully assembled 50S ribosomal subunit. The chain is Ribosomal RNA large subunit methyltransferase E from Anaplasma phagocytophilum (strain HZ).